The primary structure comprises 314 residues: Nucleotide-binding protein CE1710 (314 aa).

Residues 1–29 are disordered; that stretch reads MNQTPGSTVPETATPVTSPASSPSAPETT. Positions 7–29 are enriched in low complexity; it reads STVPETATPVTSPASSPSAPETT. ATP is bound at residue 37–44; the sequence is GMSGAGLS. A GTP-binding site is contributed by 88 to 91; that stretch reads DVRS.

Belongs to the RapZ-like family.

Displays ATPase and GTPase activities. The protein is Nucleotide-binding protein CE1710 of Corynebacterium efficiens (strain DSM 44549 / YS-314 / AJ 12310 / JCM 11189 / NBRC 100395).